A 133-amino-acid polypeptide reads, in one-letter code: Transcriptional regulator MraZ (133 aa).

2 consecutive SpoVT-AbrB domains span residues 5 to 47 (TYEH…SKDD) and 76 to 119 (TVEI…SKNK).

This sequence belongs to the MraZ family. As to quaternary structure, forms oligomers.

Its subcellular location is the cytoplasm. It is found in the nucleoid. This chain is Transcriptional regulator MraZ, found in Mycoplasma mycoides subsp. mycoides SC (strain CCUG 32753 / NCTC 10114 / PG1).